A 331-amino-acid chain; its full sequence is Protoheme IX farnesyltransferase (331 aa).

Transmembrane regions (helical) follow at residues 63-83 (LACT…LNCL), 109-129 (SVFI…VSGV), 132-152 (LAAG…TAFL), 160-180 (IVFG…AAAG), 188-208 (WLFS…AILL), 215-235 (VGIP…AISV), 241-261 (VFLS…YGIL), and 294-314 (ILYM…VSIV).

The protein belongs to the UbiA prenyltransferase family. Protoheme IX farnesyltransferase subfamily.

Its subcellular location is the cell inner membrane. The enzyme catalyses heme b + (2E,6E)-farnesyl diphosphate + H2O = Fe(II)-heme o + diphosphate. The protein operates within porphyrin-containing compound metabolism; heme O biosynthesis; heme O from protoheme: step 1/1. Converts heme B (protoheme IX) to heme O by substitution of the vinyl group on carbon 2 of heme B porphyrin ring with a hydroxyethyl farnesyl side group. The chain is Protoheme IX farnesyltransferase from Prochlorococcus marinus (strain NATL1A).